The primary structure comprises 706 residues: Glutamine-dependent NAD(+) synthetase (706 aa).

Residues 5–275 enclose the CN hydrolase domain; the sequence is VTVATCALNQ…VEVLTATLDL (271 aa). Glu-45 functions as the Proton acceptor; for glutaminase activity in the catalytic mechanism. The For glutaminase activity role is filled by Lys-114. Cys-175 (nucleophile; for glutaminase activity) is an active-site residue. Residues 325-706 are ligase; sequence YHSPEEEISL…AEPQSLDGVD (382 aa). Residue 355-362 coordinates ATP; the sequence is PLSGGVDS. Residue Ser-357 is part of the active site.

The protein in the C-terminal section; belongs to the NAD synthetase family. Homohexamer.

It catalyses the reaction deamido-NAD(+) + L-glutamine + ATP + H2O = L-glutamate + AMP + diphosphate + NAD(+) + H(+). Its pathway is cofactor biosynthesis; NAD(+) biosynthesis; NAD(+) from deamido-NAD(+) (L-Gln route): step 1/1. Functionally, catalyzes the final step of the nicotinamide adenine dinucleotide (NAD) de novo synthesis pathway, the ATP-dependent amidation of deamido-NAD using L-glutamine as a nitrogen source. This is Glutamine-dependent NAD(+) synthetase (NADSYN1) from Homo sapiens (Human).